The following is a 1603-amino-acid chain: Protein TIC 214 (1603 aa).

6 helical membrane passes run Val11 to Leu31, Leu58 to Ile78, Leu86 to Tyr106, Ile131 to Leu151, Leu167 to Ile187, and Phe213 to Phe233.

Belongs to the TIC214 family. As to quaternary structure, part of the Tic complex.

It is found in the plastid. The protein resides in the chloroplast inner membrane. Its function is as follows. Involved in protein precursor import into chloroplasts. May be part of an intermediate translocation complex acting as a protein-conducting channel at the inner envelope. This is Protein TIC 214 from Physcomitrium patens (Spreading-leaved earth moss).